Consider the following 1426-residue polypeptide: Epidermal growth factor receptor (1426 aa).

The signal sequence occupies residues 1 to 30; that stretch reads MLLRRRNGPCPFPLLLLLLAHCICIWPASA. The Extracellular segment spans residues 31–868; it reads ARDRYARQNN…SKITANLDVN (838 aa). N-linked (GlcNAc...) asparagine glycans are attached at residues N128, N241, N419, N443, N482, N569, N599, N617, N816, N823, and N828. Residues 869–889 form a helical membrane-spanning segment; sequence MIFIITGAVLVPTICILCVVT. At 890 to 1426 the chain is on the cytoplasmic side; sequence YICRQKQKAK…HRNRNTETRV (537 aa). Position 902 is a phosphothreonine; by PKC (T902). Residues 938–1198 form the Protein kinase domain; sequence LRKGGVLGMG…QLTTVFAEFA (261 aa). Residues 944 to 952 and K971 contribute to the ATP site; that span reads LGMGAFGRV. Catalysis depends on D1063, which acts as the Proton acceptor. Positions 1232 to 1297 are disordered; that stretch reads PTTDGSEAIA…DSSAREVGVG (66 aa). Residues 1257-1276 show a composition bias toward basic and acidic residues; sequence HRTDCTDEMPKLNRYCKDPS. A Phosphotyrosine; by autocatalysis modification is found at Y1310.

The protein belongs to the protein kinase superfamily. Tyr protein kinase family. EGF receptor subfamily. As to quaternary structure, homodimer. Binding of the ligand spitz triggers homodimerization of the receptor however, it is able to form dimers, albeit weakly, in the absence of spitz. Interacts (when phosphorylated on tyrosine residues) with Vav (via SH2 domain). Interacts (when ubiquitinated) with Graf. May interact (when phosphorylated) with EGFRAP (via SH2 domain). Post-translationally, ubiquitination by Cbl in response to high spi, promotes its interaction with Graf and thus facilitates its GPI-enriched endocytic compartment (GEEC) mediated endocytosis and its subsequent degradation. As to expression, ubiquitously expressed in embryos. In larvae, uniform expression is seen in wing disks, genital disk, anlagen of testis and ovary, and brain cortex. In eye-antenna disk, highest expression is anterior to morphogenetic furrow, levels remain high in photoreceptor precursor cells. This pattern is reversed in posterior eye disk. In adults expression is high in brain cortex and thoracic and abdominal ganglia.

The protein resides in the membrane. It catalyses the reaction L-tyrosyl-[protein] + ATP = O-phospho-L-tyrosyl-[protein] + ADP + H(+). Its function is as follows. Receptor tyrosine kinase, binding ligands of the EGF family and activating several signaling cascades to convert extracellular cues into appropriate cellular responses. Known ligands include spitz, gurken, vein and giant-lens. Transduces the signal through the ras-raf-MAPK pathway. Critical for the proliferation of imaginal tissues, and for the determination of both the antero-posterior and dorso-ventral polarities of the oocyte. In the embryo, plays a role in the establishment of ventral cell fates, maintenance of amnioserosa and ventral neuroectodermal cells, germ band retraction, cell fate specification in the central nervous system, and production and repair of the cuticle. During dorsal closure (DC) functions with the dpp- and ACK-signaling pathways to regulate expression of the myosin zip in the embryonic epidermis and amnioserosa (AS), and thus coordinate the progression of epidermal cell shape changes required for correct DC. In the embryonic epidermis, functions by negatively regulating dpp and consequently the dpp-dependent expression of the myosin zip. In the AS, negatively regulates the production/ and or secretion of a diffusible signal which, is produced by the ACK-signaling pathway, and acts in the AS and epidermal cells to promote zip expression. Also required in the AS to inhibit or delay apoptosis, and consequently slow the rate of DC. Therefore functions at multiple levels to negatively regulate morphogenesis during DC, suggesting that it acts as a general brake mechanism for adjusting the rate of dorsal closure to ensure that closure proceeds smoothly and without loss of epidermal integrity. During oogenesis, one of two tyrosine kinase chemoattractant receptors (Egfr and Pvr), that function in the border cells (BC) to detect guidance cues from the oocyte and transduce this information to the guidance pathway that regulate the collective migration of the BC cluster through the nurse cells to the oocyte. This chain is Epidermal growth factor receptor (Egfr), found in Drosophila melanogaster (Fruit fly).